We begin with the raw amino-acid sequence, 912 residues long: MINSLLTRVFGSRNERQLRQLTRLVTQINALEPTIEKLSDAELQAKTPEFKQRLAAGESLDKILPEAFAVCREASRRVLGMRHYDVQLIGGMVLHLGKIAEMRTGEGKTLVATLPVYLNALQGEGVHVVTVNDYLARRDAAQMGKLYNWLGLSVGVVYPGMPHSDKREAYGSDITYGTNNEFGFDYLRDNMALSRADRYQRTLHYAIVDEVDSILIDEARTPLIISGPADESPELYIRVNRIVPQLTKQESEEGEGDFWVDEKGKQVHLSEAGMGHAEELLLQAGILENAEDGLYAAQNLSVVHHLNAALRAHAIYQRDVDYIVRDGEVVIVDEFTGRTLSGRRWSDGLHQAVEAKEGVPVQRENQTLASITFQNLFRMYKKLSGMTGTADTEAYEFQSIYGLEVVVIPTNRPTVRKDHPDQVFLNRKGKFNAVLADIEDCAKRGQPVLVGTTSIETSEMLSEHLRKAGVKHEVLNAKQHEREATIVANAGQPGAVTIATNMAGRGTDIVLGGSLESEYHALGEDATEDARFKIKTDWQRRHDAVKAAGGLHIIGTERHESRRIDNQLRGRAGRQGDPGSSRFYLSLEDNLMRIFASDWVQKAMRMMGMKEDDVIEDRLVSRQIEKAQRKVEAHNFDIRKNLLDFDDVNNDQRKVIYAQRDELLDAESVKDNVDGIRGDVIYDLVARFVPPNSVDEQWDVKGLEATLESELGVTLSLTDMVRTQEEIDAEQIAAKVQAAVDAHFAEKEAAVGNDTMRALEKHVMLTVLDQGWKEHLAKMDYLRQGIYLRGYAQKQPKQEYKKEAFELFSEMLENVKREVIHLLARVRIRSEEEVAELEEQERLHAQARLMASQFQHQDVGGYGTDEEAAQVQSGNAPVPVSQVTRDEPKVGRNDPCPCGSGKKYKHCHGQLS.

Residues Gln87, 105 to 109 (GEGKT), and Asp508 contribute to the ATP site. The segment at 865-912 (DEEAAQVQSGNAPVPVSQVTRDEPKVGRNDPCPCGSGKKYKHCHGQLS) is disordered. Cys896, Cys898, Cys907, and His908 together coordinate Zn(2+). Residues 902–912 (KKYKHCHGQLS) show a composition bias toward basic residues.

This sequence belongs to the SecA family. Monomer and homodimer. Part of the essential Sec protein translocation apparatus which comprises SecA, SecYEG and auxiliary proteins SecDF-YajC and YidC. Zn(2+) is required as a cofactor.

It localises to the cell inner membrane. The protein localises to the cytoplasm. It carries out the reaction ATP + H2O + cellular proteinSide 1 = ADP + phosphate + cellular proteinSide 2.. Functionally, part of the Sec protein translocase complex. Interacts with the SecYEG preprotein conducting channel. Has a central role in coupling the hydrolysis of ATP to the transfer of proteins into and across the cell membrane, serving both as a receptor for the preprotein-SecB complex and as an ATP-driven molecular motor driving the stepwise translocation of polypeptide chains across the membrane. This is Protein translocase subunit SecA from Xanthomonas oryzae pv. oryzae (strain MAFF 311018).